A 434-amino-acid chain; its full sequence is uncharacterized protein (434 aa).

Residue lysine 216 is modified to N6-(pyridoxal phosphate)lysine.

This is an uncharacterized protein from Schizosaccharomyces pombe (strain 972 / ATCC 24843) (Fission yeast).